The primary structure comprises 143 residues: Nucleoside diphosphate kinase (143 aa).

ATP is bound by residues Lys11, Phe59, Arg87, Thr93, Arg104, and Asn114. The active-site Pros-phosphohistidine intermediate is the His117.

It belongs to the NDK family. In terms of assembly, homotetramer. Mg(2+) serves as cofactor.

It localises to the cytoplasm. It carries out the reaction a 2'-deoxyribonucleoside 5'-diphosphate + ATP = a 2'-deoxyribonucleoside 5'-triphosphate + ADP. The enzyme catalyses a ribonucleoside 5'-diphosphate + ATP = a ribonucleoside 5'-triphosphate + ADP. Functionally, major role in the synthesis of nucleoside triphosphates other than ATP. The ATP gamma phosphate is transferred to the NDP beta phosphate via a ping-pong mechanism, using a phosphorylated active-site intermediate. This chain is Nucleoside diphosphate kinase, found in Nitrosococcus oceani (strain ATCC 19707 / BCRC 17464 / JCM 30415 / NCIMB 11848 / C-107).